Here is a 290-residue protein sequence, read N- to C-terminus: Lipoyl synthase (290 aa).

[4Fe-4S] cluster contacts are provided by Cys36, Cys41, Cys47, Cys62, Cys66, Cys69, and Ser275. In terms of domain architecture, Radical SAM core spans 48-264 (FSKKTATFMI…KEEALKIGFS (217 aa)).

This sequence belongs to the radical SAM superfamily. Lipoyl synthase family. [4Fe-4S] cluster is required as a cofactor.

It localises to the cytoplasm. The catalysed reaction is [[Fe-S] cluster scaffold protein carrying a second [4Fe-4S](2+) cluster] + N(6)-octanoyl-L-lysyl-[protein] + 2 oxidized [2Fe-2S]-[ferredoxin] + 2 S-adenosyl-L-methionine + 4 H(+) = [[Fe-S] cluster scaffold protein] + N(6)-[(R)-dihydrolipoyl]-L-lysyl-[protein] + 4 Fe(3+) + 2 hydrogen sulfide + 2 5'-deoxyadenosine + 2 L-methionine + 2 reduced [2Fe-2S]-[ferredoxin]. It functions in the pathway protein modification; protein lipoylation via endogenous pathway; protein N(6)-(lipoyl)lysine from octanoyl-[acyl-carrier-protein]: step 2/2. Functionally, catalyzes the radical-mediated insertion of two sulfur atoms into the C-6 and C-8 positions of the octanoyl moiety bound to the lipoyl domains of lipoate-dependent enzymes, thereby converting the octanoylated domains into lipoylated derivatives. In Alkaliphilus metalliredigens (strain QYMF), this protein is Lipoyl synthase.